Here is a 287-residue protein sequence, read N- to C-terminus: 4-hydroxybenzoate octaprenyltransferase (287 aa).

9 consecutive transmembrane segments (helical) span residues 21 to 41, 44 to 64, 91 to 111, 112 to 132, 139 to 159, 160 to 180, 211 to 231, 235 to 255, and 263 to 283; these read VGIF…AKGA, FKIA…GCIV, VTEA…LVLL, LNRL…VYPF, LPQL…FAAT, VGHV…WPIV, LMIG…GWYL, YWFY…QFLI, and CFAA…GILL.

It belongs to the UbiA prenyltransferase family. The cofactor is Mg(2+).

It is found in the cell inner membrane. The catalysed reaction is all-trans-octaprenyl diphosphate + 4-hydroxybenzoate = 4-hydroxy-3-(all-trans-octaprenyl)benzoate + diphosphate. The protein operates within cofactor biosynthesis; ubiquinone biosynthesis. In terms of biological role, catalyzes the prenylation of para-hydroxybenzoate (PHB) with an all-trans polyprenyl group. Mediates the second step in the final reaction sequence of ubiquinone-8 (UQ-8) biosynthesis, which is the condensation of the polyisoprenoid side chain with PHB, generating the first membrane-bound Q intermediate 3-octaprenyl-4-hydroxybenzoate. The chain is 4-hydroxybenzoate octaprenyltransferase from Coxiella burnetii (strain RSA 331 / Henzerling II).